A 211-amino-acid chain; its full sequence is Uracil phosphoribosyltransferase (211 aa).

30–34 is a binding site for GTP; that stretch reads KGLVR. 5-phospho-alpha-D-ribose 1-diphosphate is bound by residues Arg79, Arg104, and 133–141; that span reads DPMLATGTT. Residues Ile197 and 202–204 contribute to the uracil site; that span reads GDA. 5-phospho-alpha-D-ribose 1-diphosphate is bound at residue Asp203.

Belongs to the UPRTase family. Mg(2+) is required as a cofactor.

The catalysed reaction is UMP + diphosphate = 5-phospho-alpha-D-ribose 1-diphosphate + uracil. Its pathway is pyrimidine metabolism; UMP biosynthesis via salvage pathway; UMP from uracil: step 1/1. Its activity is regulated as follows. Allosterically activated by GTP. Catalyzes the conversion of uracil and 5-phospho-alpha-D-ribose 1-diphosphate (PRPP) to UMP and diphosphate. This Pyrobaculum arsenaticum (strain DSM 13514 / JCM 11321 / PZ6) protein is Uracil phosphoribosyltransferase.